The primary structure comprises 388 residues: MKFVDEATIRVEAGNGGSGCVSFRREKYVPDGGPDGGDGGDGGSVYLQADENLNTLITYQFERFHNAERGKNGRGRDCTGHGGEDLVLKVPVGTRAVDAETEETLGDLTTHGQKMLVAKGGFHGLGNTRFKSSTNRAPRQKTLGTDGEVRSLRLELMLLADVGLLGMPNAGKSTFIRSVSKAKPKVADYPFTTLVPNLGVVNPRPGQSFVIADIPGLIEGAADGAGLGVQFLKHLERCRVLLHILDIEPIDGSNPVDSARAIVGELEKHSPKLAGKPRWLVINKADLMLEEELQEKIDKVVEELAWDGEVFTISAYNREGTAELALKLLDFIDTLPPEEEVDVEAEVEFKWDNYHQNANESVNEDYDDDLDDDDYDDDDYDVEVIYQR.

Positions 1-159 constitute an Obg domain; sequence MKFVDEATIR…RSLRLELMLL (159 aa). Residues 160-333 form the OBG-type G domain; the sequence is ADVGLLGMPN…LALKLLDFID (174 aa). GTP is bound by residues 166–173, 191–195, 213–216, 283–286, and 314–316; these read GMPNAGKS, FTTLV, DIPG, NKAD, and SAY. Residues Ser-173 and Thr-193 each coordinate Mg(2+). The disordered stretch occupies residues 356-377; sequence QNANESVNEDYDDDLDDDDYDD. The segment covering 362 to 377 has biased composition (acidic residues); it reads VNEDYDDDLDDDDYDD.

It belongs to the TRAFAC class OBG-HflX-like GTPase superfamily. OBG GTPase family. Monomer. The cofactor is Mg(2+).

Its subcellular location is the cytoplasm. An essential GTPase which binds GTP, GDP and possibly (p)ppGpp with moderate affinity, with high nucleotide exchange rates and a fairly low GTP hydrolysis rate. Plays a role in control of the cell cycle, stress response, ribosome biogenesis and in those bacteria that undergo differentiation, in morphogenesis control. The protein is GTPase Obg of Shewanella piezotolerans (strain WP3 / JCM 13877).